The following is a 444-amino-acid chain: Protein kinase C and casein kinase substrate in neurons protein 1 (444 aa).

Residues serine 2 and serine 79 each carry the phosphoserine modification. Residues 13–283 (EETTDSFWEV…AIRGADAQED (271 aa)) form the F-BAR domain. A coiled-coil region spans residues 26–275 (KRTVKRIDDG…HVYRELEQAI (250 aa)). Disordered stretches follow at residues 175-194 (MNSKTEQSVTPEQQKKLQDK) and 309-386 (LPHT…DDSK). Position 184 is a phosphothreonine (threonine 184). Basic and acidic residues predominate over residues 314–324 (TKKEKQPKKAE). The segment covering 329–351 (TNATGAVESTSQAGDRGSVSSYD) has biased composition (polar residues). A phosphoserine mark is found at serine 346, serine 348, serine 349, serine 361, and serine 365. An SH3 domain is found at 385–444 (SKGVRVRALYDYDGQEQDELSFKAGDELTKLGEEDEQGWCRGRLDSGQLGLYPANYVEAI). Tyrosine 394 carries the phosphotyrosine modification. Residues serine 405 and serine 430 each carry the phosphoserine modification.

It belongs to the PACSIN family. In terms of assembly, may form heterooligomers with other PACSINs. Interacts with MAPT. Interacts with TRPV4. Interacts (via SH3 domain) with SYNJ1 and WASL. Interacts with DNM2 and DNM3. Interacts with both COBL and DBNL. Identified in a complex composed of COBL, PACSIN1 and WASL. Interacts with EHD1 and EHD3. Homodimer. Interacts (via SH3 domain) with DNM1; the interaction is reduced by DNM1 phosphorylation. Phosphorylated by casein kinase 2 (CK2) and protein kinase C (PKC). As to expression, highly expressed in brain and, at much lower levels, in heart and pancreas.

The protein localises to the cytoplasm. It localises to the cell projection. It is found in the synapse. The protein resides in the synaptosome. Its subcellular location is the ruffle membrane. The protein localises to the membrane. It localises to the cytoplasmic vesicle membrane. It is found in the cytosol. The protein resides in the cell membrane. Plays a role in the reorganization of the microtubule cytoskeleton via its interaction with MAPT; this decreases microtubule stability and inhibits MAPT-induced microtubule polymerization. Plays a role in cellular transport processes by recruiting DNM1, DNM2 and DNM3 to membranes. Plays a role in the reorganization of the actin cytoskeleton and in neuron morphogenesis via its interaction with COBL and WASL, and by recruiting COBL to the cell cortex. Plays a role in the regulation of neurite formation, neurite branching and the regulation of neurite length. Required for normal synaptic vesicle endocytosis; this process retrieves previously released neurotransmitters to accommodate multiple cycles of neurotransmission. Required for normal excitatory and inhibitory synaptic transmission. Binds to membranes via its F-BAR domain and mediates membrane tubulation. The polypeptide is Protein kinase C and casein kinase substrate in neurons protein 1 (PACSIN1) (Homo sapiens (Human)).